The chain runs to 410 residues: Elongation factor Tu, chloroplastic (410 aa).

The 205-residue stretch at 10 to 214 (KPHVNIGTIG…QVDAYIPTPE (205 aa)) folds into the tr-type G domain. The tract at residues 19 to 26 (GHVDHGKT) is G1. Residue 19–26 (GHVDHGKT) participates in GTP binding. T26 is a binding site for Mg(2+). The interval 60 to 64 (GITIN) is G2. A G3 region spans residues 81–84 (DCPG). GTP is bound by residues 81–85 (DCPGH) and 136–139 (NKED). A G4 region spans residues 136-139 (NKED). The interval 174–176 (SAL) is G5.

This sequence belongs to the TRAFAC class translation factor GTPase superfamily. Classic translation factor GTPase family. EF-Tu/EF-1A subfamily.

The protein resides in the plastid. The protein localises to the chloroplast. It catalyses the reaction GTP + H2O = GDP + phosphate + H(+). Its function is as follows. GTP hydrolase that promotes the GTP-dependent binding of aminoacyl-tRNA to the A-site of ribosomes during protein biosynthesis. In Chlorokybus atmophyticus (Soil alga), this protein is Elongation factor Tu, chloroplastic (tufA).